A 128-amino-acid chain; its full sequence is Probable cystatin-15 (128 aa).

The signal sequence occupies residues 1-20 (MFWKLPLLLGLLALGPHVCS). An intrachain disulfide couples C82 to C92. N-linked (GlcNAc...) asparagine glycosylation occurs at N104. C105 and C125 are oxidised to a cystine.

Belongs to the cystatin family.

It localises to the secreted. The sequence is that of Probable cystatin-15 from Bos taurus (Bovine).